Reading from the N-terminus, the 449-residue chain is Sensor protein QseC (449 aa).

At M1–R12 the chain is on the cytoplasmic side. Residues L13–W33 traverse the membrane as a helical segment. The Periplasmic portion of the chain corresponds to K34 to A156. A helical membrane pass occupies residues L157–I177. Topologically, residues M178 to W449 are cytoplasmic. One can recognise a Histidine kinase domain in the interval D243–W449. At H246 the chain carries Phosphohistidine; by autocatalysis.

It localises to the cell inner membrane. It catalyses the reaction ATP + protein L-histidine = ADP + protein N-phospho-L-histidine.. In terms of biological role, member of a two-component regulatory system QseB/QseC. Activates the flagella regulon by activating transcription of FlhDC. May activate QseB by phosphorylation. This is Sensor protein QseC (qseC) from Escherichia coli (strain K12).